A 250-amino-acid polypeptide reads, in one-letter code: Flavin-dependent thymidylate synthase (250 aa).

In terms of domain architecture, ThyX spans 7-233; it reads LRVQLIAKTD…PAVFADFEVT (227 aa). Residues Ser71, 95–97, and Gln103 each bind FAD; that span reads RHR. DUMP contacts are provided by residues 92–95, 103–107, and Arg172; these read ELIR and QLSQR. Positions 95–105 match the ThyX motif motif; sequence RHRHFSYSQLS. Residues 188–190 and His194 contribute to the FAD site; that span reads NYR. Arg199 contributes to the dUMP binding site. The active-site Involved in ionization of N3 of dUMP, leading to its activation is the Arg199.

The protein belongs to the thymidylate synthase ThyX family. In terms of assembly, homotetramer. Requires FAD as cofactor.

It catalyses the reaction dUMP + (6R)-5,10-methylene-5,6,7,8-tetrahydrofolate + NADPH + H(+) = dTMP + (6S)-5,6,7,8-tetrahydrofolate + NADP(+). Its pathway is pyrimidine metabolism; dTTP biosynthesis. Catalyzes the reductive methylation of 2'-deoxyuridine-5'-monophosphate (dUMP) to 2'-deoxythymidine-5'-monophosphate (dTMP) while utilizing 5,10-methylenetetrahydrofolate (mTHF) as the methyl donor, and NADPH and FADH(2) as the reductant. The chain is Flavin-dependent thymidylate synthase from Mycobacterium bovis (strain ATCC BAA-935 / AF2122/97).